Reading from the N-terminus, the 52-residue chain is Conotoxin Cal9.2c (52 aa).

The propeptide occupies 1-6 (KKGVTL). Disulfide bonds link cysteine 14/cysteine 31, cysteine 19/cysteine 41, and cysteine 21/cysteine 46.

In terms of tissue distribution, expressed by the venom duct.

It is found in the secreted. In terms of biological role, probable neurotoxin with unknown target. Possibly targets ion channels. This chain is Conotoxin Cal9.2c, found in Californiconus californicus (California cone).